We begin with the raw amino-acid sequence, 430 residues long: Tol-Pal system protein TolB (430 aa).

A signal peptide spans 1–26; sequence MSLMTKLGLRTLVASCLIAVGGAANA.

The protein belongs to the TolB family. In terms of assembly, the Tol-Pal system is composed of five core proteins: the inner membrane proteins TolA, TolQ and TolR, the periplasmic protein TolB and the outer membrane protein Pal. They form a network linking the inner and outer membranes and the peptidoglycan layer.

It localises to the periplasm. Its function is as follows. Part of the Tol-Pal system, which plays a role in outer membrane invagination during cell division and is important for maintaining outer membrane integrity. The polypeptide is Tol-Pal system protein TolB (Paraburkholderia xenovorans (strain LB400)).